Here is a 492-residue protein sequence, read N- to C-terminus: Glycylpeptide N-tetradecanoyltransferase 2 (492 aa).

The disordered stretch occupies residues methionine 1 to asparagine 77. Residues glutamate 15 to asparagine 32 show a composition bias toward acidic residues. Positions lysine 46–glutamate 57 are enriched in basic residues. The span at serine 61 to serine 72 shows a compositional bias: polar residues. 8 residues coordinate tetradecanoyl-CoA: histidine 111, tryptophan 116, leucine 244, valine 246, serine 252, arginine 254, valine 255, and alanine 256.

Belongs to the NMT family.

The protein resides in the cytoplasm. Its subcellular location is the membrane. The enzyme catalyses N-terminal glycyl-[protein] + tetradecanoyl-CoA = N-tetradecanoylglycyl-[protein] + CoA + H(+). The catalysed reaction is N-terminal glycyl-L-lysyl-[protein] + tetradecanoyl-CoA = N-terminal glycyl-(N(6)-tetradecanoyl)-L-lysyl-[protein] + CoA + H(+). Adds a myristoyl group to the N-terminal glycine residue of certain cellular and viral proteins. Also able to mediate N-terminal lysine myristoylation of proteins. The sequence is that of Glycylpeptide N-tetradecanoyltransferase 2 from Danio rerio (Zebrafish).